The following is a 256-amino-acid chain: UPF0246 protein Sde_3824 (256 aa).

The protein belongs to the UPF0246 family.

The protein is UPF0246 protein Sde_3824 of Saccharophagus degradans (strain 2-40 / ATCC 43961 / DSM 17024).